A 164-amino-acid polypeptide reads, in one-letter code: Protein-export protein SecB (164 aa).

Belongs to the SecB family. Homotetramer, a dimer of dimers. One homotetramer interacts with 1 SecA dimer.

The protein resides in the cytoplasm. In terms of biological role, one of the proteins required for the normal export of preproteins out of the cell cytoplasm. It is a molecular chaperone that binds to a subset of precursor proteins, maintaining them in a translocation-competent state. It also specifically binds to its receptor SecA. This Orientia tsutsugamushi (strain Ikeda) (Rickettsia tsutsugamushi) protein is Protein-export protein SecB.